The primary structure comprises 1023 residues: Exportin-T (1023 aa).

The protein belongs to the exportin family.

The protein resides in the nucleus. It is found in the cytoplasm. Its function is as follows. tRNA nucleus export receptor which facilitates tRNA translocation across the nuclear pore complex. Involved in pre-tRNA splicing, probably by affecting the interaction of pre-tRNA with splicing endonuclease. The protein is Exportin-T (los1) of Sclerotinia sclerotiorum (strain ATCC 18683 / 1980 / Ss-1) (White mold).